The chain runs to 322 residues: Gluconeogenesis factor (322 aa).

Residues threonine 13, asparagine 217–methionine 219, lysine 263–glutamate 267, and arginine 300–histidine 301 each bind NAD(+).

Belongs to the gluconeogenesis factor family.

Its subcellular location is the cytoplasm. In terms of biological role, required for morphogenesis under gluconeogenic growth conditions. The polypeptide is Gluconeogenesis factor (Halalkalibacterium halodurans (strain ATCC BAA-125 / DSM 18197 / FERM 7344 / JCM 9153 / C-125) (Bacillus halodurans)).